A 103-amino-acid chain; its full sequence is Large ribosomal subunit protein bL21 (103 aa).

The protein belongs to the bacterial ribosomal protein bL21 family. Part of the 50S ribosomal subunit. Contacts protein L20.

In terms of biological role, this protein binds to 23S rRNA in the presence of protein L20. The sequence is that of Large ribosomal subunit protein bL21 from Salmonella agona (strain SL483).